The primary structure comprises 291 residues: Ribonuclease Z (291 aa).

Residues His-61, His-63, Asp-65, His-66, His-133, Asp-201, and His-257 each contribute to the Zn(2+) site. Asp-65 serves as the catalytic Proton acceptor.

This sequence belongs to the RNase Z family. In terms of assembly, homodimer. It depends on Zn(2+) as a cofactor.

It catalyses the reaction Endonucleolytic cleavage of RNA, removing extra 3' nucleotides from tRNA precursor, generating 3' termini of tRNAs. A 3'-hydroxy group is left at the tRNA terminus and a 5'-phosphoryl group is left at the trailer molecule.. In terms of biological role, zinc phosphodiesterase, which displays some tRNA 3'-processing endonuclease activity. Probably involved in tRNA maturation, by removing a 3'-trailer from precursor tRNA. In Saccharolobus islandicus (strain L.S.2.15 / Lassen #1) (Sulfolobus islandicus), this protein is Ribonuclease Z.